Reading from the N-terminus, the 198-residue chain is Probable septum site-determining protein MinC (198 aa).

This sequence belongs to the MinC family. Interacts with MinD and FtsZ.

Cell division inhibitor that blocks the formation of polar Z ring septums. Rapidly oscillates between the poles of the cell to destabilize FtsZ filaments that have formed before they mature into polar Z rings. Prevents FtsZ polymerization. The protein is Probable septum site-determining protein MinC of Thermosipho melanesiensis (strain DSM 12029 / CIP 104789 / BI429).